The chain runs to 656 residues: UvrABC system protein B (656 aa).

The Helicase ATP-binding domain maps to 29–414; it reads KLSEFKTKQQ…SLSQNNVIEQ (386 aa). 42–49 is a binding site for ATP; that stretch reads GATGTGKT. Residues 95-118 carry the Beta-hairpin motif; the sequence is YFDFYQPEAYLPSKGIYIEKSATV. The Helicase C-terminal domain occupies 434–596; the sequence is QVEDLIEEII…KTPKTVVKPL (163 aa). One can recognise a UVR domain in the interval 614-649; that stretch reads AALIKQLTKEMKKAAANQNYELAIEIRDSIFELEKE.

This sequence belongs to the UvrB family. In terms of assembly, forms a heterotetramer with UvrA during the search for lesions. Interacts with UvrC in an incision complex.

The protein resides in the cytoplasm. Its function is as follows. The UvrABC repair system catalyzes the recognition and processing of DNA lesions. A damage recognition complex composed of 2 UvrA and 2 UvrB subunits scans DNA for abnormalities. Upon binding of the UvrA(2)B(2) complex to a putative damaged site, the DNA wraps around one UvrB monomer. DNA wrap is dependent on ATP binding by UvrB and probably causes local melting of the DNA helix, facilitating insertion of UvrB beta-hairpin between the DNA strands. Then UvrB probes one DNA strand for the presence of a lesion. If a lesion is found the UvrA subunits dissociate and the UvrB-DNA preincision complex is formed. This complex is subsequently bound by UvrC and the second UvrB is released. If no lesion is found, the DNA wraps around the other UvrB subunit that will check the other stand for damage. The polypeptide is UvrABC system protein B (Mycoplasma genitalium (strain ATCC 33530 / DSM 19775 / NCTC 10195 / G37) (Mycoplasmoides genitalium)).